The following is a 431-amino-acid chain: MIERYSREEMSNIWTDQNRYEAWLEVEILACEAWSKLGDIPAEDVKKIRENAKVDVARAQEIEQETRHDVVAFTRQVSETLGEERKWVHYGLTSTDVVDTALSYVIKQANEIIKKDLERFIDVLAQKAKDYKYTLMMGRTHGVHAEPTTFGVKMALWYTEMKRNLERFKQVRKEIEVGKMSGAVGTFANIPPEIEAYVCEHLGLDAAPVSTQTLQRDRHAYYVATLALISTSMEKFAVEIRNLQKTETREVEEAFAKGQKGSSAMPHKRNPIGSENITGIARVIRGYVTTAYENVPLWHERDISHSSAERIMLPDVTIALDYGLNRFTNIVERLTVFEDNMLANIDKTFGLIYSQRVLLALINKGLAREAAYDKVQPKAMESWETKTPFRTLIEEDATITDLLTKEDLDECFNPKHHLNQVDTIFQRAGLE.

Residues Arg-4–Tyr-5, Arg-67–Asp-69, and Thr-93–Ser-94 each bind N(6)-(1,2-dicarboxyethyl)-AMP. His-141 functions as the Proton donor/acceptor in the catalytic mechanism. Gln-212 lines the N(6)-(1,2-dicarboxyethyl)-AMP pocket. The active-site Proton donor/acceptor is the Ser-262. N(6)-(1,2-dicarboxyethyl)-AMP is bound by residues Ser-263, Lys-268 to Asn-270, Asn-276, and Ser-307 to Ile-311.

Belongs to the lyase 1 family. Adenylosuccinate lyase subfamily. In terms of assembly, homodimer and homotetramer. Residues from neighboring subunits contribute catalytic and substrate-binding residues to each active site.

It carries out the reaction N(6)-(1,2-dicarboxyethyl)-AMP = fumarate + AMP. The catalysed reaction is (2S)-2-[5-amino-1-(5-phospho-beta-D-ribosyl)imidazole-4-carboxamido]succinate = 5-amino-1-(5-phospho-beta-D-ribosyl)imidazole-4-carboxamide + fumarate. It functions in the pathway purine metabolism; AMP biosynthesis via de novo pathway; AMP from IMP: step 2/2. It participates in purine metabolism; IMP biosynthesis via de novo pathway; 5-amino-1-(5-phospho-D-ribosyl)imidazole-4-carboxamide from 5-amino-1-(5-phospho-D-ribosyl)imidazole-4-carboxylate: step 2/2. In terms of biological role, catalyzes two reactions in de novo purine nucleotide biosynthesis. Catalyzes the breakdown of 5-aminoimidazole- (N-succinylocarboxamide) ribotide (SAICAR or 2-[5-amino-1-(5-phospho-beta-D-ribosyl)imidazole-4-carboxamido]succinate) to 5-aminoimidazole-4-carboxamide ribotide (AICAR or 5-amino-1-(5-phospho-beta-D-ribosyl)imidazole-4-carboxamide) and fumarate, and of adenylosuccinate (ADS or N(6)-(1,2-dicarboxyethyl)-AMP) to adenosine monophosphate (AMP) and fumarate. The protein is Adenylosuccinate lyase (purB) of Staphylococcus saprophyticus subsp. saprophyticus (strain ATCC 15305 / DSM 20229 / NCIMB 8711 / NCTC 7292 / S-41).